We begin with the raw amino-acid sequence, 86 residues long: MSNQFKILLFAKVKEVIGKDSIFIDLPLDESTSFNLIRKLKHIYPQISSTLEVSLLAVNQEYISRDQDIKINSNDEIAIIPPVSGG.

1-thioglycine; alternate is present on G86. At G86 the chain carries Glycyl adenylate; alternate.

The protein belongs to the MoaD family. MOCS2A subfamily. Heterotetramer; composed of 2 small (mocs2s) and 2 large (mocs2l) subunits. C-terminal thiocarboxylation occurs in 2 steps, it is first acyl-adenylated (-COAMP) via the hesA/moeB/thiF part of mocs3, then thiocarboxylated (-COSH) via the rhodanese domain of mocs3.

The protein localises to the cytoplasm. Its pathway is cofactor biosynthesis; molybdopterin biosynthesis. In terms of biological role, acts as a sulfur carrier required for molybdopterin biosynthesis. Component of the molybdopterin synthase complex that catalyzes the conversion of precursor Z into molybdopterin by mediating the incorporation of 2 sulfur atoms into precursor Z to generate a dithiolene group. In the complex, serves as sulfur donor by being thiocarboxylated (-COSH) at its C-terminus by mocs3. After interaction with mocs2l, the sulfur is then transferred to precursor Z to form molybdopterin. This Dictyostelium discoideum (Social amoeba) protein is Molybdopterin synthase sulfur carrier subunit (mocs2s).